The following is a 212-amino-acid chain: Cyclin-dependent kinase inhibitor 3 (212 aa).

Positions 1–24 are disordered; it reads MKPPISIQASEFDSSDEEPADDEQ. The interval 1–34 is interaction with CDK2; it reads MKPPISIQASEFDSSDEEPADDEQTPIQISWLPL. Over residues 13–24 the composition is skewed to acidic residues; that stretch reads DSSDEEPADDEQ. The Tyrosine-protein phosphatase domain occupies 32–201; sequence LPLSRVNCSQ…FRDKLAAYLS (170 aa). Cysteine 140 functions as the Phosphocysteine intermediate in the catalytic mechanism.

The protein belongs to the protein-tyrosine phosphatase family. Interacts with cyclin-dependent kinases such as CDK1, CDK2 and CDK3. Does not interact with CDK4. Interacts (via C-terminus) with phosphorylated CDK2 (via C-terminal helix). Interacts with MS4A3 (via C-terminus); the interaction enhances CDKN3 enzymatic activity.

The protein localises to the cytoplasm. Its subcellular location is the perinuclear region. The catalysed reaction is O-phospho-L-tyrosyl-[protein] + H2O = L-tyrosyl-[protein] + phosphate. The enzyme catalyses O-phospho-L-seryl-[protein] + H2O = L-seryl-[protein] + phosphate. It carries out the reaction O-phospho-L-threonyl-[protein] + H2O = L-threonyl-[protein] + phosphate. May play a role in cell cycle regulation. Dual specificity phosphatase active toward substrates containing either phosphotyrosine or phosphoserine residues. Dephosphorylates CDK2 at 'Thr-160' in a cyclin-dependent manner. The chain is Cyclin-dependent kinase inhibitor 3 from Rattus norvegicus (Rat).